Reading from the N-terminus, the 343-residue chain is UPF0283 membrane protein blr7254 (343 aa).

A run of 3 helical transmembrane segments spans residues 64 to 84 (GALFWSGLAGLTLLGVGLGVV), 97 to 117 (LGFVGLAFAFVTALALAVVIG), and 214 to 234 (IVTAVSPRAAIDVMFVFVAAL).

The protein belongs to the UPF0283 family.

It is found in the cell inner membrane. This is UPF0283 membrane protein blr7254 from Bradyrhizobium diazoefficiens (strain JCM 10833 / BCRC 13528 / IAM 13628 / NBRC 14792 / USDA 110).